Consider the following 65-residue polypeptide: Large ribosomal subunit protein uL29 (65 aa).

This sequence belongs to the universal ribosomal protein uL29 family.

The sequence is that of Large ribosomal subunit protein uL29 from Hyphomonas neptunium (strain ATCC 15444).